We begin with the raw amino-acid sequence, 223 residues long: Urease accessory protein UreF (223 aa).

This sequence belongs to the UreF family. In terms of assembly, ureD, UreF and UreG form a complex that acts as a GTP-hydrolysis-dependent molecular chaperone, activating the urease apoprotein by helping to assemble the nickel containing metallocenter of UreC. The UreE protein probably delivers the nickel.

The protein localises to the cytoplasm. In terms of biological role, required for maturation of urease via the functional incorporation of the urease nickel metallocenter. This Pseudomonas paraeruginosa (strain DSM 24068 / PA7) (Pseudomonas aeruginosa (strain PA7)) protein is Urease accessory protein UreF.